A 239-amino-acid chain; its full sequence is Tetrahydromethanopterin S-methyltransferase subunit A (239 aa).

The Cytoplasmic portion of the chain corresponds to 1–215 (MADKKAPAAG…EAAMIAKFNS (215 aa)). H85 lines the 5-hydroxybenzimidazolylcob(I)amide pocket. A helical transmembrane segment spans residues 216 to 238 (GYYNGKIQGIAIGLFLSIVIFSL). Residue L239 is a topological domain, extracellular.

This sequence belongs to the MtrA family. In terms of assembly, the complex is composed of 8 subunits; MtrA, MtrB, MtrC, MtrD, MtrE, MtrF, MtrG and MtrH. The cofactor is 5-hydroxybenzimidazolylcob(I)amide.

It localises to the cell membrane. It carries out the reaction 5-methyl-5,6,7,8-tetrahydromethanopterin + coenzyme M + 2 Na(+)(in) = 5,6,7,8-tetrahydromethanopterin + methyl-coenzyme M + 2 Na(+)(out). It participates in one-carbon metabolism; methanogenesis from CO(2); methyl-coenzyme M from 5,10-methylene-5,6,7,8-tetrahydromethanopterin: step 2/2. Part of a complex that catalyzes the formation of methyl-coenzyme M and tetrahydromethanopterin from coenzyme M and methyl-tetrahydromethanopterin. This is an energy-conserving, sodium-ion translocating step. In Methanococcus maripaludis (strain DSM 14266 / JCM 13030 / NBRC 101832 / S2 / LL), this protein is Tetrahydromethanopterin S-methyltransferase subunit A.